The chain runs to 295 residues: Taste receptor type 2 member 120 (295 aa).

Residues 1-5 lie on the Extracellular side of the membrane; the sequence is MDLTE. A helical membrane pass occupies residues 6–26; that stretch reads WIVTIIMMIEFLLGNCANFFI. Residues 27 to 45 lie on the Cytoplasmic side of the membrane; the sequence is MVVNAIDCMKRRKISSADR. Residues 46-66 form a helical membrane-spanning segment; sequence IITALAISRIGLLWAMLMNWH. The Extracellular portion of the chain corresponds to 67–83; that stretch reads SRVYTTDTYSFQVTAFS. A helical membrane pass occupies residues 84–104; the sequence is GIIWAITNHFTTWLGTILSMF. Residues 105-125 are Cytoplasmic-facing; the sequence is YLFKIANFSNCLFLHLKRKLD. Residues 126 to 146 form a helical membrane-spanning segment; sequence SVLLVIFLVSSLLVFAYLGVV. Topologically, residues 147–177 are extracellular; that stretch reads NIKKIAWLSVHEGNVTVKSKLMNIASIRDTL. Asn-160 is a glycosylation site (N-linked (GlcNAc...) asparagine). Residues 178-198 form a helical membrane-spanning segment; the sequence is LFSLINIAPFGISLTCVLLLI. Over 199–230 the chain is Cytoplasmic; the sequence is YSLGKHLKNMKFYGKGCQDQSTMVHIRALQTV. The chain crosses the membrane as a helical span at residues 231–251; sequence VSFLLLYATYSSCVIISGWSI. At 252-255 the chain is on the extracellular side; that stretch reads QNVP. A helical transmembrane segment spans residues 256 to 276; it reads IFLFCVTIGAFYPAGHSCILI. Topologically, residues 277–295 are cytoplasmic; it reads WGNQKLKQFLLLFLRQMKC.

It belongs to the G-protein coupled receptor T2R family.

Its subcellular location is the membrane. In terms of biological role, putative taste receptor which may play a role in the perception of bitterness. The protein is Taste receptor type 2 member 120 of Rattus norvegicus (Rat).